Consider the following 451-residue polypeptide: Methionine aminopeptidase 2-2 (451 aa).

A disordered region spans residues 1-97 (MAAQVEDDVA…PRVLISDLFP (97 aa)). Residues 19-28 (TKPTNGTSQP) are compositionally biased toward polar residues. Residues 35–45 (EAEDSDDDAEG) are compositionally biased toward acidic residues. A compositionally biased stretch (basic residues) spans 60 to 73 (KKKKKRKPRKKKKA). The span at 74-83 (GTSATAGAKS) shows a compositional bias: low complexity. Residue His204 coordinates substrate. 3 residues coordinate a divalent metal cation: Asp224, Asp235, and His304. Residue His312 coordinates substrate. 2 residues coordinate a divalent metal cation: Glu337 and Glu432.

It belongs to the peptidase M24A family. Methionine aminopeptidase eukaryotic type 2 subfamily. It depends on Co(2+) as a cofactor. Zn(2+) is required as a cofactor. Mn(2+) serves as cofactor. The cofactor is Fe(2+).

It localises to the cytoplasm. It catalyses the reaction Release of N-terminal amino acids, preferentially methionine, from peptides and arylamides.. Cotranslationally removes the N-terminal methionine from nascent proteins. The N-terminal methionine is often cleaved when the second residue in the primary sequence is small and uncharged (Met-Ala-, Cys, Gly, Pro, Ser, Thr, or Val). The protein is Methionine aminopeptidase 2-2 of Leptosphaeria maculans (strain JN3 / isolate v23.1.3 / race Av1-4-5-6-7-8) (Blackleg fungus).